The sequence spans 107 residues: MMVKVTYVDSANVSRTIEVAPGVSVMAAARSNDIPEIESDCGGVCTCAACHVYVDPDWVDKTGTASKVENGLLSLQETRRPNSRLSCQITLSEALDGLVIHTLEPEE.

Positions Val-3–Glu-106 constitute a 2Fe-2S ferredoxin-type domain. Cys-41, Cys-47, Cys-50, and Cys-87 together coordinate [2Fe-2S] cluster.

The protein belongs to the adrenodoxin/putidaredoxin family. It depends on [2Fe-2S] cluster as a cofactor.

Its pathway is terpene metabolism; monoterpene degradation. Its function is as follows. Involved in the degradation of the cyclic monoterpene limonene. Probably part of an electron transfer system involved in the oxidation of limonene to perillyl alcohol. The chain is 2Fe-2S ferredoxin CtmE from Castellaniella defragrans (strain DSM 12143 / CCUG 39792 / 65Phen) (Alcaligenes defragrans).